The following is a 298-amino-acid chain: ATP synthase gamma chain (298 aa).

It belongs to the ATPase gamma chain family. F-type ATPases have 2 components, CF(1) - the catalytic core - and CF(0) - the membrane proton channel. CF(1) has five subunits: alpha(3), beta(3), gamma(1), delta(1), epsilon(1). CF(0) has three main subunits: a, b and c.

Its subcellular location is the cell inner membrane. Produces ATP from ADP in the presence of a proton gradient across the membrane. The gamma chain is believed to be important in regulating ATPase activity and the flow of protons through the CF(0) complex. This is ATP synthase gamma chain from Albidiferax ferrireducens (strain ATCC BAA-621 / DSM 15236 / T118) (Rhodoferax ferrireducens).